We begin with the raw amino-acid sequence, 339 residues long: MDRRSRAMADSVLSLNKLDVGFPGMTVVRDLNLDVADGAFVSLLGPSGSGKSSVLRTIAGLLPALGGRVLLEGQDITALPPERRNVGIVFQNYALFPTMSAFENIAFALRVAKKSKAEVERRVGEVAEMAGISDQLDKKPANMSGGQQQRVAIARALVTGSRVLLFDEPLSNLDAKVRAAMRKEIKRLQSELGFTAIFVTHDQEDALTMSDLIVVLNHGKIEQIGDGRTLYRKPATPFICEFIGVSNELAPPLAARLLGYDVKGRSFLRHEDVLLGAVAGVPARVNHVEFLGAHSRVDLEVEGHALSAMLIGDQLPEPGSTVSLGIRPGAAHVFQEVTG.

The 231-residue stretch at 13 to 243 folds into the ABC transporter domain; that stretch reads LSLNKLDVGF…PATPFICEFI (231 aa). 45–52 lines the ATP pocket; that stretch reads GPSGSGKS.

This sequence belongs to the ABC transporter superfamily.

It localises to the cell inner membrane. Its function is as follows. Probably part of a binding-protein-dependent transport system y4fNOP. Probably responsible for energy coupling to the transport system. This is an uncharacterized protein from Sinorhizobium fredii (strain NBRC 101917 / NGR234).